Here is a 165-residue protein sequence, read N- to C-terminus: uncharacterized protein (165 aa).

An N-terminal signal peptide occupies residues 1–17 (MIRGFFLILLFLLLAFF).

This is an uncharacterized protein from Aquifex aeolicus (strain VF5).